We begin with the raw amino-acid sequence, 430 residues long: Cytochrome c biogenesis protein CcsB (430 aa).

3 helical membrane-spanning segments follow: residues 14–34 (LRIA…GTAI), 72–92 (SSWF…CSWR), and 162–182 (AGPM…VWGS).

It belongs to the Ccs1/CcsB family. In terms of assembly, may interact with CcsA.

The protein localises to the cellular thylakoid membrane. Functionally, required during biogenesis of c-type cytochromes (cytochrome c6 and cytochrome f) at the step of heme attachment. The sequence is that of Cytochrome c biogenesis protein CcsB from Prochlorococcus marinus (strain MIT 9313).